The chain runs to 212 residues: Pyridoxine/pyridoxamine 5'-phosphate oxidase (212 aa).

Residues 8–11 (RREY) and K66 each bind substrate. Residues 61–66 (RIVLLK), 76–77 (FT), R82, K83, and Q105 each bind FMN. Positions 123, 127, and 131 each coordinate substrate. Residues 140–141 (QS) and W185 contribute to the FMN site. 191 to 193 (RLH) contributes to the substrate binding site. R195 is an FMN binding site.

It belongs to the pyridoxamine 5'-phosphate oxidase family. As to quaternary structure, homodimer. It depends on FMN as a cofactor.

It carries out the reaction pyridoxamine 5'-phosphate + O2 + H2O = pyridoxal 5'-phosphate + H2O2 + NH4(+). The enzyme catalyses pyridoxine 5'-phosphate + O2 = pyridoxal 5'-phosphate + H2O2. Its pathway is cofactor metabolism; pyridoxal 5'-phosphate salvage; pyridoxal 5'-phosphate from pyridoxamine 5'-phosphate: step 1/1. It participates in cofactor metabolism; pyridoxal 5'-phosphate salvage; pyridoxal 5'-phosphate from pyridoxine 5'-phosphate: step 1/1. Functionally, catalyzes the oxidation of either pyridoxine 5'-phosphate (PNP) or pyridoxamine 5'-phosphate (PMP) into pyridoxal 5'-phosphate (PLP). The protein is Pyridoxine/pyridoxamine 5'-phosphate oxidase of Shewanella baltica (strain OS155 / ATCC BAA-1091).